A 251-amino-acid chain; its full sequence is MNKHERLDEIAKLVNKKGTIRTNEIVEGLNVSDMTVRRDLIELENKGILTKIHGGARSNSTFQYKEISHKEKHTRQIAEKRFIARKAASLIEDGDTLFFGPGTTVELLAEEVNHHTLTIITNCLPVYKILLEKQTAHFRVYLIGGEMRHITEAFVGEMANAMLEKLRFSKMFFSSNAVNKGAVMTSTLDEAYTQQLALSNSIEKYLLIDHTKVGKEDFTSFCQLNELTAVVMDYEDEEKVETIKTYIEVVD.

The 56-residue stretch at 3–58 (KHERLDEIAKLVNKKGTIRTNEIVEGLNVSDMTVRRDLIELENKGILTKIHGGARS) folds into the HTH deoR-type domain. Positions 20–39 (IRTNEIVEGLNVSDMTVRRD) form a DNA-binding region, H-T-H motif.

Repressor of the lactose catabolism operon. Galactose-6-phosphate is the inducer. This is Lactose phosphotransferase system repressor (lacR) from Staphylococcus aureus (strain MRSA252).